The primary structure comprises 1085 residues: DNA-directed RNA polymerase subunit beta (1085 aa).

This sequence belongs to the RNA polymerase beta chain family. In plastids the minimal PEP RNA polymerase catalytic core is composed of four subunits: alpha, beta, beta', and beta''. When a (nuclear-encoded) sigma factor is associated with the core the holoenzyme is formed, which can initiate transcription.

The protein resides in the plastid. The protein localises to the chloroplast. It catalyses the reaction RNA(n) + a ribonucleoside 5'-triphosphate = RNA(n+1) + diphosphate. In terms of biological role, DNA-dependent RNA polymerase catalyzes the transcription of DNA into RNA using the four ribonucleoside triphosphates as substrates. The polypeptide is DNA-directed RNA polymerase subunit beta (Physcomitrium patens (Spreading-leaved earth moss)).